Here is a 132-residue protein sequence, read N- to C-terminus: Small ribosomal subunit protein uS8 (132 aa).

This sequence belongs to the universal ribosomal protein uS8 family. As to quaternary structure, part of the 30S ribosomal subunit. Contacts proteins S5 and S12.

Functionally, one of the primary rRNA binding proteins, it binds directly to 16S rRNA central domain where it helps coordinate assembly of the platform of the 30S subunit. The protein is Small ribosomal subunit protein uS8 of Mycobacterium bovis (strain ATCC BAA-935 / AF2122/97).